We begin with the raw amino-acid sequence, 236 residues long: tRNA1(Val) (adenine(37)-N6)-methyltransferase (236 aa).

Belongs to the methyltransferase superfamily. tRNA (adenine-N(6)-)-methyltransferase family.

It localises to the cytoplasm. The enzyme catalyses adenosine(37) in tRNA1(Val) + S-adenosyl-L-methionine = N(6)-methyladenosine(37) in tRNA1(Val) + S-adenosyl-L-homocysteine + H(+). In terms of biological role, specifically methylates the adenine in position 37 of tRNA(1)(Val) (anticodon cmo5UAC). This chain is tRNA1(Val) (adenine(37)-N6)-methyltransferase, found in Histophilus somni (strain 2336) (Haemophilus somnus).